A 333-amino-acid polypeptide reads, in one-letter code: Fatty acid hydroxylase domain-containing protein 2 (333 aa).

6 consecutive transmembrane segments (helical) span residues 29–49 (FILGSGLLSFVAFWNSVTWHL), 77–97 (ILFFIGAIQVPCLFFWSFNGL), 134–154 (TVLFNQCMVSFPMVVFLYPFL), 168–188 (FHWFLLELAIFTLIEEVLFYY), 215–235 (VISLYAHPIEHVVSNMLPAIV), and 237–257 (PLVMGSHLSSITMWFSLALII). Positions 176 to 299 (AIFTLIEEVL…LGVLDHLHGT (124 aa)) constitute a Fatty acid hydroxylase domain.

This sequence belongs to the sterol desaturase family.

It is found in the cytoplasm. The protein resides in the membrane. Its function is as follows. Promotes megakaryocyte differentiation by enhancing ERK phosphorylation and up-regulating RUNX1 expression. The sequence is that of Fatty acid hydroxylase domain-containing protein 2 (FAXDC2) from Macaca fascicularis (Crab-eating macaque).